Reading from the N-terminus, the 441-residue chain is Serine carboxypeptidase-like 1 (441 aa).

The first 29 residues, 1 to 29 (MANKYVSSVLKSLLVLLHLVFLSKQHVDS), serve as a signal peptide directing secretion. Disulfide bonds link Cys88–Cys331, Cys252–Cys266, and Cys290–Cys297. Asn109 carries N-linked (GlcNAc...) asparagine glycosylation. The active site involves Ser184. Asn350 is a glycosylation site (N-linked (GlcNAc...) asparagine). Asp366 is a catalytic residue. A glycan (N-linked (GlcNAc...) asparagine) is linked at Asn382. His419 is a catalytic residue.

Belongs to the peptidase S10 family. In terms of tissue distribution, expressed in seedlings and roots.

Its subcellular location is the secreted. In terms of biological role, probable carboxypeptidase. The protein is Serine carboxypeptidase-like 1 (SCPL1) of Arabidopsis thaliana (Mouse-ear cress).